The chain runs to 283 residues: Putative 4-diphosphocytidyl-2-C-methyl-D-erythritol kinase (283 aa).

K11 is an active-site residue. Position 95-105 (95-105 (PVCAGMGGGSS)) interacts with ATP. Residue D137 is part of the active site.

It belongs to the GHMP kinase family. IspE subfamily.

The enzyme catalyses 4-CDP-2-C-methyl-D-erythritol + ATP = 4-CDP-2-C-methyl-D-erythritol 2-phosphate + ADP + H(+). Functionally, catalyzes the phosphorylation of the position 2 hydroxy group of 4-diphosphocytidyl-2C-methyl-D-erythritol. The polypeptide is Putative 4-diphosphocytidyl-2-C-methyl-D-erythritol kinase (Streptococcus equi subsp. equi (strain 4047)).